Reading from the N-terminus, the 313-residue chain is Aspartate carbamoyltransferase catalytic subunit (313 aa).

Carbamoyl phosphate is bound by residues R55 and T56. Position 83 (K83) interacts with L-aspartate. R105, H138, and Q141 together coordinate carbamoyl phosphate. 2 residues coordinate L-aspartate: R171 and R225. Residues G266 and P267 each contribute to the carbamoyl phosphate site.

Belongs to the aspartate/ornithine carbamoyltransferase superfamily. ATCase family. In terms of assembly, heterododecamer (2C3:3R2) of six catalytic PyrB chains organized as two trimers (C3), and six regulatory PyrI chains organized as three dimers (R2).

It carries out the reaction carbamoyl phosphate + L-aspartate = N-carbamoyl-L-aspartate + phosphate + H(+). Its pathway is pyrimidine metabolism; UMP biosynthesis via de novo pathway; (S)-dihydroorotate from bicarbonate: step 2/3. Catalyzes the condensation of carbamoyl phosphate and aspartate to form carbamoyl aspartate and inorganic phosphate, the committed step in the de novo pyrimidine nucleotide biosynthesis pathway. The chain is Aspartate carbamoyltransferase catalytic subunit from Corynebacterium diphtheriae (strain ATCC 700971 / NCTC 13129 / Biotype gravis).